A 1203-amino-acid polypeptide reads, in one-letter code: Metabotropic glutamate receptor 5 (1203 aa).

Positions 1 to 20 (MVLLLILSVLLLKEDVRGSA) are cleaved as a signal peptide. Residues 21-579 (QSSERRVVAH…QYLRWGDPEP (559 aa)) lie on the Extracellular side of the membrane. Cys-57 and Cys-99 form a disulfide bridge. Residue Tyr-64 participates in L-glutamate binding. Asn-88 carries N-linked (GlcNAc...) asparagine glycosylation. L-glutamate contacts are provided by residues Ser-151 and 172–174 (SAT). The N-linked (GlcNAc...) asparagine glycan is linked to Asn-209. Tyr-222 serves as a coordination point for L-glutamate. Intrachain disulfides connect Cys-240/Cys-529, Cys-275/Cys-277, Cys-364/Cys-380, Cys-418/Cys-425, Cys-510/Cys-530, Cys-514/Cys-533, Cys-536/Cys-548, and Cys-551/Cys-564. An L-glutamate-binding site is contributed by Asp-304. N-linked (GlcNAc...) asparagine glycans are attached at residues Asn-377 and Asn-381. Lys-395 provides a ligand contact to L-glutamate. Asn-444 carries N-linked (GlcNAc...) asparagine glycosylation. The helical transmembrane segment at 580-602 (IAAVVFACLGLLATLFVTVIFII) threads the bilayer. Over 603-612 (YRDTPVVKSS) the chain is Cytoplasmic. The chain crosses the membrane as a helical span at residues 613 to 635 (SRELCYIILAGICLGYLCTFCLI). Over 636–643 (AKPKQIYC) the chain is Extracellular. Cys-643 and Cys-732 are oxidised to a cystine. Residues 644–666 (YLQRIGIGLSPAMSYSALVTKTN) form a helical membrane-spanning segment. Residues 667 to 692 (RIARILAGSKKKICTKKPRFMSACAQ) lie on the Cytoplasmic side of the membrane. A helical membrane pass occupies residues 693-713 (LVIAFILICIQLGIIVALFIM). Topologically, residues 714–736 (EPPDIMHDYPSIREVYLICNTTN) are extracellular. A glycan (N-linked (GlcNAc...) asparagine) is linked at Asn-733. Residues 737–758 (LGVVTPLGYNGLLILSCTFYAF) form a helical membrane-spanning segment. Residues 759-771 (KTRNVPANFNEAK) are Cytoplasmic-facing. A helical transmembrane segment spans residues 772–794 (YIAFTMYTTCIIWLAFVPIYFGS). Over 795-797 (NYK) the chain is Extracellular. Residues 798–819 (IITMCFSVSLSATVALGCMFVP) form a helical membrane-spanning segment. Over 820–1203 (KVYIILAKPE…RDYTQSSSSL (384 aa)) the chain is Cytoplasmic. The residue at position 860 (Ser-860) is a Phosphoserine. Arg-868 carries the post-translational modification Omega-N-methylarginine. 3 disordered regions span residues 892 to 970 (FTPK…GSGP), 1003 to 1054 (EESF…GSLM), and 1122 to 1182 (GAQG…ALCI). A compositionally biased stretch (polar residues) spans 905–920 (TMSSSNGKSVTWAQNE). Position 924 is an omega-N-methylarginine (Arg-924). A compositionally biased stretch (low complexity) spans 1007 to 1017 (PAAARPRSPSP). Ser-1014 and Ser-1016 each carry phosphoserine. Polar residues-rich tracts occupy residues 1039 to 1054 (HSETAARSSSSQGSLM) and 1165 to 1176 (DSGSTTPNSPVS).

This sequence belongs to the G-protein coupled receptor 3 family. As to quaternary structure, interacts with RYR1, RYR2, ITPR1, SHANK1 and SHANK3. The PPXXF motif binds HOMER1, HOMER2 and HOMER3. Interacts with SIAH1 and TAMALIN. Interacts with NCDN. Interacts with NECAB2. Interacts with CAMK2A. In terms of tissue distribution, widely distributed in neuronal cells of the central nervous system.

Its subcellular location is the cell membrane. In terms of biological role, G-protein coupled receptor for glutamate. Ligand binding causes a conformation change that triggers signaling via guanine nucleotide-binding proteins (G proteins) and modulates the activity of down-stream effectors. Signaling activates a phosphatidylinositol-calcium second messenger system and generates a calcium-activated chloride current. Plays an important role in the regulation of synaptic plasticity and the modulation of the neural network activity. This chain is Metabotropic glutamate receptor 5 (Grm5), found in Rattus norvegicus (Rat).